The sequence spans 458 residues: MSITKEFDTITAISTPLGEGAIGIVRLSGTDALAIAQSVFKGKNLEQVASHTINYGHIINPKTGTIIDEVMVSVMLAPKTFTRENVVEINTHGGIAVTNEILQLLIRQGARMAEPGEFTKRAFLNGRVDLTQAEAVMDIIRAKTDKAMTIAVKQLDGSLSQLINDTRQEILNTLAQVEVNIDYPEYDDVEEMTTALLREKTQEFQSLLESLLRTAKRGKILREGLSTAIIGRPNVGKSSLLNNLLREDKAIVTDIAGTTRDVIEEYVNIKGVPLKLVDTAGIRETDDLVEQIGVERSKKALQEADLVLLVLNASEKLTDQDRALLNLSQDSNRIILLNKTDLEQKIELEQLPDDYIPISVLTNQNINLIEDRINQLFFDNAGLVEQDATYLSNARHISLIEKAVQSLEAVNDGLALGMPVDLLQVDLTRTWEILGEITGDAAPDELITQLFSQFCLGK.

Arg-26, Glu-88, and Arg-127 together coordinate (6S)-5-formyl-5,6,7,8-tetrahydrofolate. The region spanning 224-378 (GLSTAIIGRP…IEDRINQLFF (155 aa)) is the TrmE-type G domain. Asn-234 contacts K(+). GTP contacts are provided by residues 234-239 (NVGKSS), 253-259 (TDIAGTT), and 278-281 (DTAG). Ser-238 serves as a coordination point for Mg(2+). K(+) is bound by residues Thr-253, Ile-255, and Thr-258. Residue Thr-259 participates in Mg(2+) binding. Residue Lys-458 coordinates (6S)-5-formyl-5,6,7,8-tetrahydrofolate.

Belongs to the TRAFAC class TrmE-Era-EngA-EngB-Septin-like GTPase superfamily. TrmE GTPase family. Homodimer. Heterotetramer of two MnmE and two MnmG subunits. K(+) serves as cofactor.

It localises to the cytoplasm. Exhibits a very high intrinsic GTPase hydrolysis rate. Involved in the addition of a carboxymethylaminomethyl (cmnm) group at the wobble position (U34) of certain tRNAs, forming tRNA-cmnm(5)s(2)U34. The chain is tRNA modification GTPase MnmE from Streptococcus pyogenes serotype M1.